Here is a 185-residue protein sequence, read N- to C-terminus: dCTP deaminase (185 aa).

107–112 (KSTYAR) is a dCTP binding site. E133 acts as the Proton donor/acceptor in catalysis. DCTP-binding residues include Q152, Y166, and Q176.

This sequence belongs to the dCTP deaminase family. In terms of assembly, homotrimer.

It carries out the reaction dCTP + H2O + H(+) = dUTP + NH4(+). It functions in the pathway pyrimidine metabolism; dUMP biosynthesis; dUMP from dCTP (dUTP route): step 1/2. In terms of biological role, catalyzes the deamination of dCTP to dUTP. The protein is dCTP deaminase of Nitratiruptor sp. (strain SB155-2).